We begin with the raw amino-acid sequence, 430 residues long: Probable protein phosphatase 1N (430 aa).

Residues 16–65 (CKKKEREKEGREEEEEEEAGRRAPEGPRSLLTAPRRAQRPHGGAEASGGL) are disordered. The segment covering 17–26 (KKKEREKEGR) has biased composition (basic and acidic residues). Residues 66–326 (RFGASAAQGW…DNMTCILVCF (261 aa)) enclose the PPM-type phosphatase domain. Residues Asp103, Gly104, Asp274, and Asp317 each contribute to the Mn(2+) site. The segment at 407–430 (GEKGQDGAGKSNPTHLGSALDMEA) is disordered.

Belongs to the PP2C family. Requires Mg(2+) as cofactor. Mn(2+) serves as cofactor.

The enzyme catalyses O-phospho-L-seryl-[protein] + H2O = L-seryl-[protein] + phosphate. The catalysed reaction is O-phospho-L-threonyl-[protein] + H2O = L-threonyl-[protein] + phosphate. The polypeptide is Probable protein phosphatase 1N (PPM1N) (Homo sapiens (Human)).